The following is a 250-amino-acid chain: Expansin-like B1 (250 aa).

The signal sequence occupies residues 1–24; sequence MKHSHVLLLLFVQVIVLLPLLCLS. In terms of domain architecture, Expansin-like EG45 spans 45–149; sequence RGHCGYGEFG…QRIPCRYAGY (105 aa). N72 carries an N-linked (GlcNAc...) asparagine glycan. The region spanning 163–245 is the Expansin-like CBD domain; that stretch reads HYLAILVLYV…DWTAGATYDS (83 aa).

The protein belongs to the expansin family. Expansin-like B subfamily.

It is found in the secreted. This chain is Expansin-like B1 (EXLB1), found in Arabidopsis thaliana (Mouse-ear cress).